The chain runs to 147 residues: Hemoglobin subunit beta (147 aa).

The 145-residue stretch at 3–147 (EWTDDERAII…VVSALGRQYH (145 aa)) folds into the Globin domain. Heme b-binding residues include histidine 64 and histidine 93.

It belongs to the globin family. As to quaternary structure, heterotetramer of two alpha chains and two beta chains. As to expression, red blood cells.

Its function is as follows. Involved in oxygen transport from gills to the various peripheral tissues. The protein is Hemoglobin subunit beta (hbb) of Melanogrammus aeglefinus (Haddock).